A 255-amino-acid polypeptide reads, in one-letter code: 5'-nucleotidase SurE (255 aa).

D8, D9, S40, and N93 together coordinate a divalent metal cation.

It belongs to the SurE nucleotidase family. It depends on a divalent metal cation as a cofactor.

Its subcellular location is the cytoplasm. The enzyme catalyses a ribonucleoside 5'-phosphate + H2O = a ribonucleoside + phosphate. Nucleotidase that shows phosphatase activity on nucleoside 5'-monophosphates. The sequence is that of 5'-nucleotidase SurE from Bradyrhizobium sp. (strain BTAi1 / ATCC BAA-1182).